The following is a 230-amino-acid chain: Ribonuclease 3 (230 aa).

In terms of domain architecture, RNase III spans 19 to 134 (ELLTIALTHR…LLGAIYLEHG (116 aa)). Mg(2+) is bound at residue glutamate 44. The active site involves aspartate 48. Residues aspartate 120 and glutamate 123 each contribute to the Mg(2+) site. Residues 161–229 (DWKSSLQELT…AASAYKTLDE (69 aa)) enclose the DRBM domain.

The protein belongs to the ribonuclease III family. As to quaternary structure, homodimer. The cofactor is Mg(2+).

It localises to the cytoplasm. The enzyme catalyses Endonucleolytic cleavage to 5'-phosphomonoester.. Functionally, digests double-stranded RNA. Involved in the processing of primary rRNA transcript to yield the immediate precursors to the all rRNAs (23S, 16S and 5S). Processes some mRNAs, and tRNAs when they are encoded in the rRNA operon. Processes pre-crRNA and tracrRNA of type II CRISPR loci if present in the organism. This Mycolicibacterium smegmatis (strain ATCC 700084 / mc(2)155) (Mycobacterium smegmatis) protein is Ribonuclease 3 (rnc).